A 240-amino-acid polypeptide reads, in one-letter code: Biosynthetic peptidoglycan transglycosylase (240 aa).

Residues 9 to 31 (FLNVVKWFAIASVLLVLLFRVVP) traverse the membrane as a helical segment.

Belongs to the glycosyltransferase 51 family.

Its subcellular location is the cell inner membrane. The enzyme catalyses [GlcNAc-(1-&gt;4)-Mur2Ac(oyl-L-Ala-gamma-D-Glu-L-Lys-D-Ala-D-Ala)](n)-di-trans,octa-cis-undecaprenyl diphosphate + beta-D-GlcNAc-(1-&gt;4)-Mur2Ac(oyl-L-Ala-gamma-D-Glu-L-Lys-D-Ala-D-Ala)-di-trans,octa-cis-undecaprenyl diphosphate = [GlcNAc-(1-&gt;4)-Mur2Ac(oyl-L-Ala-gamma-D-Glu-L-Lys-D-Ala-D-Ala)](n+1)-di-trans,octa-cis-undecaprenyl diphosphate + di-trans,octa-cis-undecaprenyl diphosphate + H(+). The protein operates within cell wall biogenesis; peptidoglycan biosynthesis. Peptidoglycan polymerase that catalyzes glycan chain elongation from lipid-linked precursors. In Pseudomonas fluorescens (strain SBW25), this protein is Biosynthetic peptidoglycan transglycosylase.